The following is a 265-amino-acid chain: MTSTGPETSETPGATTQRHGFGIDVGGSGIKGGIVDLDTGQLIGDRIKLLTPQPATPLAVAKTIAEVVNGFGWRGPLGVTYPGVVTHGVVRTAANVDKSWIGTNARDTIGAELGGQQVTILNDADAAGLAETRYGAGKNNPGLVVLLTFGTGIGSAVIHNGTLIPNTEFGHLEVGGKEAEERAASSVKEKNDWTYPKWAKQVIRVLIAIENAIWPDLFIAGGGISRKADKWVPLLENRTPVVPAALQNTAGIVGAAMASVADTTH.

Positions 1–18 (MTSTGPETSETPGATTQR) are enriched in polar residues. A disordered region spans residues 1–22 (MTSTGPETSETPGATTQRHGFG). 24-29 (DVGGSG) contacts ATP.

This sequence belongs to the ROK (NagC/XylR) family. As to quaternary structure, homodimer.

It carries out the reaction [phosphate](n) + D-glucose = [phosphate](n-1) + D-glucose 6-phosphate + H(+). It catalyses the reaction D-glucose + ATP = D-glucose 6-phosphate + ADP + H(+). In terms of biological role, catalyzes the phosphorylation of glucose using polyphosphate or ATP as the phosphoryl donor. Polyphosphate, rather than ATP, seems to be the major phosphate donor for the enzyme in M.tuberculosis. GTP, UTP and CTP can replace ATP as phosphoryl donor. In Mycobacterium tuberculosis (strain ATCC 25177 / H37Ra), this protein is Polyphosphate glucokinase (ppgK).